Consider the following 647-residue polypeptide: Type II methyltransferase M.FokI (647 aa).

Short sequence motifs (adenine-specific methylase) lie at residues Asp-218 to Tyr-221 and Asp-548 to Tyr-551.

It belongs to the N(4)/N(6)-methyltransferase family. In terms of assembly, monomer.

The catalysed reaction is a 2'-deoxyadenosine in DNA + S-adenosyl-L-methionine = an N(6)-methyl-2'-deoxyadenosine in DNA + S-adenosyl-L-homocysteine + H(+). In terms of biological role, an alpha subtype methylase that recognizes the asymmetric double-stranded sequence 5'-GGATG-3', methylates A-3 of both strands, and protects the DNA from cleavage by the FokI endonuclease. In Planomicrobium okeanokoites (Planococcus okeanokoites), this protein is Type II methyltransferase M.FokI.